A 104-amino-acid polypeptide reads, in one-letter code: Pole-localizer protein TmaR (104 aa).

Coiled-coil stretches lie at residues 7–34 (IVNQ…NRKR) and 76–96 (SAEI…LTEE).

It belongs to the pole-localizer TmaR family.

Its subcellular location is the cytoplasm. Pole-localizer protein involved in the regulation of several cellular processes. This Vibrio atlanticus (strain LGP32) (Vibrio splendidus (strain Mel32)) protein is Pole-localizer protein TmaR.